Reading from the N-terminus, the 456-residue chain is Methylenetetrahydrofolate--tRNA-(uracil-5-)-methyltransferase TrmFO (456 aa).

11–16 (GAGLAG) provides a ligand contact to FAD.

This sequence belongs to the MnmG family. TrmFO subfamily. The cofactor is FAD.

It localises to the cytoplasm. It carries out the reaction uridine(54) in tRNA + (6R)-5,10-methylene-5,6,7,8-tetrahydrofolate + NADH + H(+) = 5-methyluridine(54) in tRNA + (6S)-5,6,7,8-tetrahydrofolate + NAD(+). It catalyses the reaction uridine(54) in tRNA + (6R)-5,10-methylene-5,6,7,8-tetrahydrofolate + NADPH + H(+) = 5-methyluridine(54) in tRNA + (6S)-5,6,7,8-tetrahydrofolate + NADP(+). Catalyzes the folate-dependent formation of 5-methyl-uridine at position 54 (M-5-U54) in all tRNAs. The polypeptide is Methylenetetrahydrofolate--tRNA-(uracil-5-)-methyltransferase TrmFO (Synechococcus sp. (strain CC9605)).